The chain runs to 261 residues: Protein-ADP-ribose hydrolase (261 aa).

The Macro domain occupies 74–261 (ADLKPVTGRG…DEALYNKLMS (188 aa)). 3 residues coordinate ADP-D-ribose: Asp93, Ile94, and Asn107. Zn(2+) contacts are provided by Cys113, His118, and Cys120. The ADP-D-ribose site is built by Cys120, Ile121, Asp122, Ser211, Thr212, Gly213, and Phe215.

The protein belongs to the MacroD-type family. Zn-Macro subfamily. Requires Zn(2+) as cofactor.

It catalyses the reaction 4-O-(ADP-D-ribosyl)-L-aspartyl-[protein] + H2O = L-aspartyl-[protein] + ADP-D-ribose + H(+). Functionally, ADP-ribosylhydrolase that specifically reverses the SirTM-mediated mono-ADP-ribosylation at an asparatate residue of GcvH-L, by releasing ADP-ribose from the target protein. May play a role in the regulation of the response to host-induced oxidative stress. The protein is Protein-ADP-ribose hydrolase of Treponema medium.